Consider the following 213-residue polypeptide: ATP synthase peripheral stalk subunit OSCP, mitochondrial (213 aa).

Residues 1–23 constitute a mitochondrion transit peptide; that stretch reads MAAPAASGLSRQVRSFSTSVVRP. The short motif at 5–23 is the SIFI-degron element; that stretch reads AASGLSRQVRSFSTSVVRP. An N6-acetyllysine mark is found at lysine 54, lysine 60, lysine 70, and lysine 73. Lysine 90 bears the N6-succinyllysine mark. Residues lysine 100, lysine 158, and lysine 162 each carry the N6-acetyllysine; alternate modification. N6-succinyllysine; alternate is present on residues lysine 100, lysine 158, and lysine 162. N6-acetyllysine is present on residues lysine 172, lysine 176, and lysine 192. Lysine 199 carries the N6-succinyllysine modification.

The protein belongs to the ATPase delta chain family. As to quaternary structure, component of the ATP synthase complex composed at least of ATP5F1A/subunit alpha, ATP5F1B/subunit beta, ATP5MC1/subunit c (homooctomer), MT-ATP6/subunit a, MT-ATP8/subunit 8, ATP5ME/subunit e, ATP5MF/subunit f, ATP5MG/subunit g, ATP5MK/subunit k, ATP5MJ/subunit j, ATP5F1C/subunit gamma, ATP5F1D/subunit delta, ATP5F1E/subunit epsilon, ATP5PF/subunit F6, ATP5PB/subunit b, ATP5PD/subunit d, ATP5PO/subunit OSCP. ATP synthase complex consists of a soluble F(1) head domain (subunits alpha(3) and beta(3)) - the catalytic core - and a membrane F(0) domain - the membrane proton channel (subunits c, a, 8, e, f, g, k and j). These two domains are linked by a central stalk (subunits gamma, delta, and epsilon) rotating inside the F1 region and a stationary peripheral stalk (subunits F6, b, d, and OSCP). Post-translationally, acetylation of Lys-70 and Lys-158 is observed in liver mitochondria from fasted mice but not from fed mice. Acetylation at Lys-162 decreases ATP production. Deacetylated by SIRT3. In terms of processing, in response to mitochondrial stress, the precursor protein is ubiquitinated by the SIFI complex in the cytoplasm before mitochondrial import, leading to its degradation. Within the SIFI complex, UBR4 initiates ubiquitin chain that are further elongated or branched by KCMF1.

The protein resides in the mitochondrion. Its subcellular location is the mitochondrion inner membrane. Its function is as follows. Subunit OSCP, of the mitochondrial membrane ATP synthase complex (F(1)F(0) ATP synthase or Complex V) that produces ATP from ADP in the presence of a proton gradient across the membrane which is generated by electron transport complexes of the respiratory chain. ATP synthase complex consist of a soluble F(1) head domain - the catalytic core - and a membrane F(1) domain - the membrane proton channel. These two domains are linked by a central stalk rotating inside the F(1) region and a stationary peripheral stalk. During catalysis, ATP synthesis in the catalytic domain of F(1) is coupled via a rotary mechanism of the central stalk subunits to proton translocation. In vivo, can only synthesize ATP although its ATP hydrolase activity can be activated artificially in vitro. Part of the complex F(0) domain. Part of the complex F(0) domain and the peripheric stalk, which acts as a stator to hold the catalytic alpha(3)beta(3) subcomplex and subunit a/ATP6 static relative to the rotary elements. This is ATP synthase peripheral stalk subunit OSCP, mitochondrial from Mus musculus (Mouse).